The sequence spans 106 residues: Valine dehydrogenase (106 aa).

Lysine 91 is a catalytic residue.

This sequence belongs to the Glu/Leu/Phe/Val dehydrogenases family. Homodimer.

It is found in the cytoplasm. It carries out the reaction L-valine + NAD(+) + H2O = 3-methyl-2-oxobutanoate + NH4(+) + NADH + H(+). Its pathway is amino-acid degradation; L-valine degradation. Functionally, oxidative deamination of branched-chain amino acids. The catabolism of valine is the major source of fatty acid precursors for macrolide biosynthesis and a vital source of antibiotic precursors. This chain is Valine dehydrogenase (vdh), found in Streptomyces ambofaciens.